Here is a 191-residue protein sequence, read N- to C-terminus: Heme-binding protein 1 (191 aa).

It belongs to the HEBP family. In terms of assembly, monomer.

The protein resides in the cytoplasm. Its function is as follows. May bind free porphyrinogens that may be present in the cell and thus facilitate removal of these potentially toxic compound. Binds with a high affinity to one molecule of heme or porphyrins. It binds metalloporphyrins, free porphyrins and N-methylprotoporphyrin with similar affinities. This chain is Heme-binding protein 1 (HEBP1), found in Bos taurus (Bovine).